We begin with the raw amino-acid sequence, 106 residues long: PTS system fructose-like EIIB component 2 (106 aa).

One can recognise a PTS EIIB type-2 domain in the interval 1 to 103 (MTKIIAVTAC…IMSKIEAHLA (103 aa)). C10 acts as the Phosphocysteine intermediate in catalysis. Residue C10 is modified to Phosphocysteine; by EIIA.

It localises to the cytoplasm. It carries out the reaction D-fructose(out) + N(pros)-phospho-L-histidyl-[protein] = D-fructose 1-phosphate(in) + L-histidyl-[protein]. The phosphoenolpyruvate-dependent sugar phosphotransferase system (sugar PTS), a major carbohydrate active transport system, catalyzes the phosphorylation of incoming sugar substrates concomitantly with their translocation across the cell membrane. The enzyme II FrwABC PTS system is involved in fructose transport. The polypeptide is PTS system fructose-like EIIB component 2 (frwB) (Escherichia coli O157:H7).